The primary structure comprises 179 residues: Replication restart protein DnaT (179 aa).

Over residues 151–168 (SRSSNGGMPQRDINSVSE) the composition is skewed to polar residues. The tract at residues 151–179 (SRSSNGGMPQRDINSVSEPDNHIPPGFRG) is disordered.

Belongs to the DnaT family. Homooligomerizes. Interacts with PriB. Component of the replication restart primosome. Primosome assembly occurs via a 'hand-off' mechanism. PriA binds to replication forks, subsequently PriB then DnaT bind; DnaT then displaces ssDNA to generate the helicase loading substrate.

Its function is as follows. Involved in the restart of stalled replication forks, which reloads the replicative helicase on sites other than the origin of replication. Can function in multiple replication restart pathways. Displaces ssDNA from a PriB-ssDNA complex. Probably forms a spiral filament on ssDNA. This is Replication restart protein DnaT from Salmonella heidelberg (strain SL476).